The primary structure comprises 350 residues: Chorismate synthase (350 aa).

Residues R39 and R45 each contribute to the NADP(+) site. The tract at residues 85–104 (KDKKVPPVTRPRPGHADLPG) is disordered. FMN contacts are provided by residues 119–121 (RAS), 213–214 (QG), G258, 273–277 (KPIPT), and R299.

Belongs to the chorismate synthase family. Homotetramer. Requires FMNH2 as cofactor.

The enzyme catalyses 5-O-(1-carboxyvinyl)-3-phosphoshikimate = chorismate + phosphate. The protein operates within metabolic intermediate biosynthesis; chorismate biosynthesis; chorismate from D-erythrose 4-phosphate and phosphoenolpyruvate: step 7/7. In terms of biological role, catalyzes the anti-1,4-elimination of the C-3 phosphate and the C-6 proR hydrogen from 5-enolpyruvylshikimate-3-phosphate (EPSP) to yield chorismate, which is the branch point compound that serves as the starting substrate for the three terminal pathways of aromatic amino acid biosynthesis. This reaction introduces a second double bond into the aromatic ring system. The sequence is that of Chorismate synthase from Caldanaerobacter subterraneus subsp. tengcongensis (strain DSM 15242 / JCM 11007 / NBRC 100824 / MB4) (Thermoanaerobacter tengcongensis).